The primary structure comprises 158 residues: Large ribosomal subunit protein uL15 (158 aa).

Belongs to the universal ribosomal protein uL15 family. As to quaternary structure, part of the 50S ribosomal subunit.

Functionally, binds to the 23S rRNA. This chain is Large ribosomal subunit protein uL15, found in Aeropyrum pernix (strain ATCC 700893 / DSM 11879 / JCM 9820 / NBRC 100138 / K1).